Here is a 364-residue protein sequence, read N- to C-terminus: Carbamoyl phosphate synthase pyrimidine-specific small chain (364 aa).

The interval 1-171 (MKRRLVLENG…AYPSPGRGKR (171 aa)) is CPSase. Residues S45, G219, and G221 each coordinate L-glutamine. The Glutamine amidotransferase type-1 domain maps to 171–356 (RIVLVDFGMK…IEMIETTEKE (186 aa)). The active-site Nucleophile is C246. 5 residues coordinate L-glutamine: L247, Q250, N288, G290, and Y291. Active-site residues include H329 and E331.

This sequence belongs to the CarA family. Composed of two chains; the small (or glutamine) chain promotes the hydrolysis of glutamine to ammonia, which is used by the large (or ammonia) chain to synthesize carbamoyl phosphate. Tetramer of heterodimers (alpha,beta)4. Interacts with BrxC.

It catalyses the reaction hydrogencarbonate + L-glutamine + 2 ATP + H2O = carbamoyl phosphate + L-glutamate + 2 ADP + phosphate + 2 H(+). It carries out the reaction L-glutamine + H2O = L-glutamate + NH4(+). The protein operates within pyrimidine metabolism; UMP biosynthesis via de novo pathway; (S)-dihydroorotate from bicarbonate: step 1/3. Its function is as follows. Small subunit of the glutamine-dependent carbamoyl phosphate synthetase (CPSase). CPSase catalyzes the formation of carbamoyl phosphate from the ammonia moiety of glutamine, carbonate, and phosphate donated by ATP, constituting the first step of the biosynthetic pathway leading to arginine and/or urea. The small subunit (glutamine amidotransferase) binds and cleaves glutamine to supply the large subunit with the substrate ammonia. The chain is Carbamoyl phosphate synthase pyrimidine-specific small chain from Bacillus subtilis (strain 168).